The following is a 92-amino-acid chain: MTRSRKKNPFVANHLLKKIKKLNTKGEKAIIKTWSRKSTIIPIMIGHTIAIHNGKEHLPVYITDRMVGHKLGEFSPTLNFGGFAKNDNKSRR.

Belongs to the universal ribosomal protein uS19 family.

It is found in the plastid. Its subcellular location is the chloroplast. Protein S19 forms a complex with S13 that binds strongly to the 16S ribosomal RNA. This chain is Small ribosomal subunit protein uS19c (rps19), found in Pisum sativum (Garden pea).